A 329-amino-acid polypeptide reads, in one-letter code: MAMTPAVKNEISHLPVTRTCCRKAEVSAILRFAGGLHLVSGRIVIEAELDTGNAARRLKRDILEIFGHSSELIVMAPGGLRRGSRFVVRVVAGGDQLARQTGLVDGRGRPIRGLPPQVVSGATCDAEAAWRGAFLAHGSLTEPGRSSSLEVTCPGPEAALALVGAARRLSIAAKAREVRGVDRVVVRDGDAIGALLTRLGAHDAVLAWEERRMRREVRATANRLANFDDANLRRSARAAVAAGARVGRALEILGEEVPEHLAAAGRLRMEHKQASLEELGALADPPLTKDAVAGRIRRLLAMADKRAQDLGIPGTESTLSEELADGLVG.

The H-T-H motif DNA-binding region spans 275-308 (SLEELGALADPPLTKDAVAGRIRRLLAMADKRAQ).

Belongs to the WhiA family.

In terms of biological role, involved in cell division and chromosome segregation. This is Probable cell division protein WhiA from Streptomyces griseus subsp. griseus (strain JCM 4626 / CBS 651.72 / NBRC 13350 / KCC S-0626 / ISP 5235).